A 511-amino-acid polypeptide reads, in one-letter code: Aminotransferase FGSG_17085 (511 aa).

165–166 (GA) contacts pyridoxal 5'-phosphate. Tyr200 provides a ligand contact to substrate. Asp310 is a binding site for pyridoxal 5'-phosphate. The residue at position 339 (Lys339) is an N6-(pyridoxal phosphate)lysine. Residue Gly371 participates in substrate binding. 372-373 (HT) serves as a coordination point for pyridoxal 5'-phosphate.

It belongs to the class-III pyridoxal-phosphate-dependent aminotransferase family. Pyridoxal 5'-phosphate serves as cofactor.

The protein operates within secondary metabolite biosynthesis. Its function is as follows. Aminotransferase; part of the gene cluster that mediates the biosynthesis of the lipopeptide fusaristatin A. Fusaristatin A consists of a polyketide chain linked to three amino acid residues glutamine (Gln), dehydroalanine (dehydro-Ala), and beta-aminoisobutyric acid. The biosynthesis starts with formation of a linear polyketide chain by the highly reducing polyketide synthase PKS6. The gene cluster does not contain an acyl-CoA ligase or an acyl-transferase, and it is therefore predicted that the polyketide is transferred directly to the nonribosomal peptide synthetase NRPS7. Modules 1-3 from NRPS7 incorporate dehydro-Ala, Gln, and beta-aminoisobutyric acid in the compound, which is released by cyclization. The beta-aminoisobutyric acid units are most likely not freely available to the NRPS, but can be synthesized from thymine, which requires a dehydrogenase, a monooxygenase, and an aminotransferase. The fusaristatin A cluster contains a cytochrome P450 monooxygenase (FGSG_08207) and an aminotransferase (FGSG_17085), which theoretically can perform two of the enzymatic steps. The enzymes may however also be involved in biosynthesis of dehydroalanine or modification of the polyketide. The dehydro-Ala residue can be a result of cyclization, where serine is dehydrated. The last gene of the cluster encodes a protein with an A/B barrel domain found in variable enzymes, which hampers functional prediction. This is Aminotransferase FGSG_17085 from Gibberella zeae (strain ATCC MYA-4620 / CBS 123657 / FGSC 9075 / NRRL 31084 / PH-1) (Wheat head blight fungus).